The primary structure comprises 117 residues: uncharacterized protein (117 aa).

Residues 16–56 form a disordered region; the sequence is FSQSSDGRSNGGGSSSGDSVSTTSDGLLTTGTSPNTSSTSL. The span at 31-56 shows a compositional bias: low complexity; that stretch reads SGDSVSTTSDGLLTTGTSPNTSSTSL.

This is an uncharacterized protein from Saccharomyces cerevisiae (strain ATCC 204508 / S288c) (Baker's yeast).